A 283-amino-acid polypeptide reads, in one-letter code: Bifunctional protein FolD (283 aa).

Residues 165–167 (GRG), T192, and V233 contribute to the NADP(+) site.

The protein belongs to the tetrahydrofolate dehydrogenase/cyclohydrolase family. Homodimer.

It carries out the reaction (6R)-5,10-methylene-5,6,7,8-tetrahydrofolate + NADP(+) = (6R)-5,10-methenyltetrahydrofolate + NADPH. The catalysed reaction is (6R)-5,10-methenyltetrahydrofolate + H2O = (6R)-10-formyltetrahydrofolate + H(+). The protein operates within one-carbon metabolism; tetrahydrofolate interconversion. In terms of biological role, catalyzes the oxidation of 5,10-methylenetetrahydrofolate to 5,10-methenyltetrahydrofolate and then the hydrolysis of 5,10-methenyltetrahydrofolate to 10-formyltetrahydrofolate. The chain is Bifunctional protein FolD from Thermobifida fusca (strain YX).